Consider the following 188-residue polypeptide: Diphosphoinositol polyphosphate phosphohydrolase DDP1 (188 aa).

Residues 1–21 (MGKTADNHGPVRSETAREGRE) are compositionally biased toward basic and acidic residues. The disordered stretch occupies residues 1 to 23 (MGKTADNHGPVRSETAREGRENQ). The Nudix hydrolase domain maps to 30–179 (GARLVAGCIC…KRPELLEALN (150 aa)). 1D-myo-inositol hexakisphosphate is bound by residues Arg32, Ser52, Ser53, and Lys63. Residues Arg32, Ser52, Ser53, and Lys63 each coordinate 5-diphospho-1D-myo-inositol 1,2,3,4,6-pentakisphosphate. P(1),P(5)-bis(5'-adenosyl) pentaphosphate is bound by residues Arg32, Ser52, Ser53, and Lys63. Mg(2+) is bound by residues Lys63, Glu80, and Glu84. A Nudix box motif is present at residues 65-86 (GVEKDEPNYETTAQRETWEEAG). Asp100 contributes to the P(1),P(5)-bis(5'-adenosyl) pentaphosphate binding site. Residues Arg102, Arg129, Arg152, and Arg171 each coordinate 1D-myo-inositol hexakisphosphate. Residue Arg102 coordinates 5-diphospho-1D-myo-inositol 1,2,3,4,6-pentakisphosphate. Residues Arg152 and Arg171 each contribute to the 5-diphospho-1D-myo-inositol 1,2,3,4,6-pentakisphosphate site. The P(1),P(5)-bis(5'-adenosyl) pentaphosphate site is built by Arg152, Arg171, and Glu173.

It belongs to the Nudix hydrolase family. DIPP subfamily. Mg(2+) serves as cofactor. It depends on Mn(2+) as a cofactor. The cofactor is Zn(2+).

It is found in the cytoplasm. The protein resides in the nucleus. It carries out the reaction diphospho-myo-inositol polyphosphate + H2O = myo-inositol polyphosphate + phosphate.. The enzyme catalyses P(1),P(6)-bis(5'-adenosyl) hexaphosphate + H2O = adenosine 5'-pentaphosphate + AMP + 2 H(+). The catalysed reaction is P(1),P(5)-bis(5'-adenosyl) pentaphosphate + H2O = adenosine 5'-tetraphosphate + AMP + 2 H(+). It catalyses the reaction [phosphate](n+1) + n H2O = (n+1) phosphate + n H(+). May eliminate potentially toxic dinucleoside polyphosphates during sporulation. Most active against diadenosine 5',5'''-P1,P6-hexaphosphate (Ap6A). Can also hydrolyze diadenosine 5',5'''-P1,P5-pentaphosphate (Ap5A), adenosine 5'-pentaphosphate (p5A), and adenosine 5'-tetraphosphate (p4A) are also substrates, but not diadenosine 5',5'''-P1,P4-tetraphosphate (Ap4A) or other dinucleotides, mononucleotides, nucleotide sugars, or nucleotide alcohols. Also cleaves a beta-phosphate from the diphosphate groups in PP-InsP5 (diphosphoinositol pentakisphosphate) and [PP]2-InsP4 (bisdiphosphoinositol tetrakisphosphate). Also has endopolyphosphatase activity. In Saccharomyces cerevisiae (strain ATCC 204508 / S288c) (Baker's yeast), this protein is Diphosphoinositol polyphosphate phosphohydrolase DDP1 (DDP1).